The sequence spans 357 residues: O-methyltransferase 9 (357 aa).

Residues Gly-200, Asp-224, Asn-249, Phe-250, and Lys-263 each coordinate S-adenosyl-L-methionine. Residue His-267 is the Proton acceptor of the active site.

It belongs to the class I-like SAM-binding methyltransferase superfamily. Cation-independent O-methyltransferase family. COMT subfamily.

The enzyme catalyses (3,5-dichloro-2,4,6-trihydroxyphenyl)hexan-1-one + S-adenosyl-L-methionine = 1-(3,5-dichloro-2,6-dihydroxy-4-methoxyphenyl)hexan-1-one + S-adenosyl-L-homocysteine + H(+). The protein is O-methyltransferase 9 (omt9) of Dictyostelium discoideum (Social amoeba).